The sequence spans 56 residues: UPF0434 protein ECH_0194 (56 aa).

Belongs to the UPF0434 family.

The polypeptide is UPF0434 protein ECH_0194 (Ehrlichia chaffeensis (strain ATCC CRL-10679 / Arkansas)).